Here is an 801-residue protein sequence, read N- to C-terminus: Endonuclease MutS2 (801 aa).

336–343 is an ATP binding site; sequence GPNTGGKT. Positions 696 to 721 are disordered; that stretch reads AQQSKAKQKQQKIVKTKTASGSARAT. The span at 701 to 710 shows a compositional bias: basic residues; that stretch reads AKQKQQKIVK. The region spanning 726–801 is the Smr domain; the sequence is LDLRGVRYEA…GDGATIAELS (76 aa).

It belongs to the DNA mismatch repair MutS family. MutS2 subfamily. Homodimer. Binds to stalled ribosomes, contacting rRNA.

Endonuclease that is involved in the suppression of homologous recombination and thus may have a key role in the control of bacterial genetic diversity. Functionally, acts as a ribosome collision sensor, splitting the ribosome into its 2 subunits. Detects stalled/collided 70S ribosomes which it binds and splits by an ATP-hydrolysis driven conformational change. Acts upstream of the ribosome quality control system (RQC), a ribosome-associated complex that mediates the extraction of incompletely synthesized nascent chains from stalled ribosomes and their subsequent degradation. Probably generates substrates for RQC. The protein is Endonuclease MutS2 of Leuconostoc citreum (strain KM20).